The following is a 394-amino-acid chain: E3 ubiquitin-protein ligase RNF149 (394 aa).

The N-terminal stretch at 1-31 (MAARRRPAAGVGARDALAVLALALCTPGVGG) is a signal peptide. Residues Asn-51 and Asn-141 are each glycosylated (N-linked (GlcNAc...) asparagine). Residues 66-171 (SSLREERQGL…PKGREIFDLV (106 aa)) enclose the PA domain. A helical transmembrane segment spans residues 197–217 (VVFVAIAFITMMIISLAWLIF). Residues 265-306 (CAVCIENFKVKDVIRILPCKHIFHRICIDPWLLDHRTCPMCK) form an RING-type; atypical zinc finger. Positions 321 to 394 (DTQELPTPEA…SEPQHGGSIC (74 aa)) are disordered. Residue Thr-327 is modified to Phosphothreonine. Asn-339 carries N-linked (GlcNAc...) asparagine glycosylation. Ser-341 and Ser-344 each carry phosphoserine. The segment covering 352 to 362 (SNLPSSSSSES) has biased composition (low complexity).

Its subcellular location is the membrane. It catalyses the reaction S-ubiquitinyl-[E2 ubiquitin-conjugating enzyme]-L-cysteine + [acceptor protein]-L-lysine = [E2 ubiquitin-conjugating enzyme]-L-cysteine + N(6)-ubiquitinyl-[acceptor protein]-L-lysine.. It participates in protein modification; protein ubiquitination. Its function is as follows. E3 ubiquitin-protein ligase. Ubiquitinates BRAF, inducing its proteasomal degradation. The sequence is that of E3 ubiquitin-protein ligase RNF149 (Rnf149) from Mus musculus (Mouse).